A 187-amino-acid polypeptide reads, in one-letter code: GTP cyclohydrolase 1 (187 aa).

3 residues coordinate Zn(2+): Cys-76, His-79, and Cys-148.

It belongs to the GTP cyclohydrolase I family. In terms of assembly, toroid-shaped homodecamer, composed of two pentamers of five dimers.

The catalysed reaction is GTP + H2O = 7,8-dihydroneopterin 3'-triphosphate + formate + H(+). The protein operates within cofactor biosynthesis; 7,8-dihydroneopterin triphosphate biosynthesis; 7,8-dihydroneopterin triphosphate from GTP: step 1/1. In Streptococcus suis (strain 98HAH33), this protein is GTP cyclohydrolase 1.